Reading from the N-terminus, the 434-residue chain is Putative G3BP-like protein (434 aa).

The region spanning 18 to 134 (IGWMFVQEYY…YFVLNDIFRF (117 aa)) is the NTF2 domain. Disordered stretches follow at residues 141–180 (EEEESPDAVEKEKKDVASEPYVNGVQSQEHLPSAKEEGHY) and 274–308 (VKSQASVSSTASTTGQTVKGVNADQTQQPTAPYTQ). A Phosphoserine modification is found at Ser-145. The span at 148-157 (AVEKEKKDVA) shows a compositional bias: basic and acidic residues. Low complexity predominate over residues 276–291 (SQASVSSTASTTGQTV). A compositionally biased stretch (polar residues) spans 296 to 308 (ADQTQQPTAPYTQ). Positions 315–386 (TSVFVKNIPP…ATLNIEERRR (72 aa)) constitute an RRM domain. Residues 390-434 (GKFNKSGDKKSNDNYNGMKRNFRKGNRGAFDGRSKEVTTSKKQNN) form a disordered region. Residues 419-428 (FDGRSKEVTT) show a composition bias toward basic and acidic residues.

In terms of biological role, probable scaffold protein that may be involved in mRNA transport. This chain is Putative G3BP-like protein (nxt3), found in Schizosaccharomyces pombe (strain 972 / ATCC 24843) (Fission yeast).